Here is a 1162-residue protein sequence, read N- to C-terminus: DNA-directed RNA polymerase subunit beta 1 (1162 aa).

This sequence belongs to the RNA polymerase beta chain family. The RNAP catalytic core consists of 2 alpha, 1 beta, 1 beta' and 1 omega subunit. When a sigma factor is associated with the core the holoenzyme is formed, which can initiate transcription.

It carries out the reaction RNA(n) + a ribonucleoside 5'-triphosphate = RNA(n+1) + diphosphate. In terms of biological role, DNA-dependent RNA polymerase catalyzes the transcription of DNA into RNA using the four ribonucleoside triphosphates as substrates. The protein is DNA-directed RNA polymerase subunit beta 1 of Nocardia farcinica (strain IFM 10152).